We begin with the raw amino-acid sequence, 429 residues long: Enolase (429 aa).

Q168 is a binding site for (2R)-2-phosphoglycerate. Residue E210 is the Proton donor of the active site. Mg(2+) is bound by residues D247, E288, and D315. 4 residues coordinate (2R)-2-phosphoglycerate: K340, R369, S370, and K391. Residue K340 is the Proton acceptor of the active site.

Belongs to the enolase family. It depends on Mg(2+) as a cofactor.

The protein resides in the cytoplasm. It localises to the secreted. Its subcellular location is the cell surface. It catalyses the reaction (2R)-2-phosphoglycerate = phosphoenolpyruvate + H2O. The protein operates within carbohydrate degradation; glycolysis; pyruvate from D-glyceraldehyde 3-phosphate: step 4/5. Functionally, catalyzes the reversible conversion of 2-phosphoglycerate (2-PG) into phosphoenolpyruvate (PEP). It is essential for the degradation of carbohydrates via glycolysis. This is Enolase from Nostoc punctiforme (strain ATCC 29133 / PCC 73102).